Here is a 389-residue protein sequence, read N- to C-terminus: MIKNTIKKLIEHSIYTTFKLLSKLPNKNLIYFESFHGKQYSDNPKALYEYLTEHSDAQLIWGVKKGYEHIFQQHNVPYVTKFSMKWFLAMPRAKAWMINTRTPDWLYKSPRTTYLQTWHGTPLKKIGLDISNVKMLGTNTQNYQDGFKKESQRWDYLVSPNPYSTSIFQNAFHVSRDKILETGYPRNDKLSHKRNDTEYINGIKTRLNIPLDKKVIMYAPTWRDDEAIREGSYQFNVNFDIEALRQALDDDYVILLRMHYLVVTRIDEHDDFVKDVSDYEDISDLYLISDALVTDYSSVMFDFGVLKRPQIFYAYDLDKYGDELRGFYMDYKKELPGPIVENQTALIDALKQIDETANEYIEARTVFYQKFCSLEDGQASQRICQTIFK.

It belongs to the CDP-glycerol glycerophosphotransferase family.

It localises to the cell membrane. The enzyme catalyses 4-O-[(2R)-glycerylphospho]-N-acetyl-beta-D-mannosaminyl-(1-&gt;4)-N-acetyl-alpha-D-glucosaminyl di-trans,octa-cis-undecaprenyl diphosphate + CDP-glycerol = 4-O-[di(2R)-glycerylphospho]-N-acetyl-beta-D-mannosaminyl-(1-&gt;4)-N-acetyl-alpha-D-glucosaminyl di-trans,octa-cis-undecaprenyl diphosphate + CMP + H(+). The protein operates within cell wall biogenesis; poly(ribitol phosphate) teichoic acid biosynthesis. Its function is as follows. Catalyzes the addition of a second glycerol phosphate unit from CDP-glycerol to the prenolpyrophosphate-linked disaccharide, to complete the linkage unit. The polypeptide is Teichoic acid glycerol-phosphate transferase (tarF) (Staphylococcus aureus (strain NCTC 8325 / PS 47)).